The primary structure comprises 145 residues: MKNKFLIIDTSILPDVFDKVVKVKELLRTGHVKDISEGVKQVGISRSTYYKYRDSVFTLSESVAGHKITLGLTLAHKAGTLSKILDNIAQKKGNILTINQDIPINNAANVSITFDASQLEVEVNELMEDIRTLKSVIKVNLAAVE.

The 76-residue stretch at 69-144 (TLGLTLAHKA…SVIKVNLAAV (76 aa)) folds into the ACT domain.

The protein belongs to the UPF0735 family.

The sequence is that of UPF0735 ACT domain-containing protein CKL_0858 from Clostridium kluyveri (strain ATCC 8527 / DSM 555 / NBRC 12016 / NCIMB 10680 / K1).